The following is a 363-amino-acid chain: Chorismate synthase (363 aa).

2 residues coordinate NADP(+): arginine 48 and arginine 54. FMN is bound by residues arginine 131–serine 133, asparagine 244–alanine 245, glycine 288, lysine 303–serine 307, and arginine 329.

The protein belongs to the chorismate synthase family. Homotetramer. It depends on FMNH2 as a cofactor.

The catalysed reaction is 5-O-(1-carboxyvinyl)-3-phosphoshikimate = chorismate + phosphate. The protein operates within metabolic intermediate biosynthesis; chorismate biosynthesis; chorismate from D-erythrose 4-phosphate and phosphoenolpyruvate: step 7/7. Its function is as follows. Catalyzes the anti-1,4-elimination of the C-3 phosphate and the C-6 proR hydrogen from 5-enolpyruvylshikimate-3-phosphate (EPSP) to yield chorismate, which is the branch point compound that serves as the starting substrate for the three terminal pathways of aromatic amino acid biosynthesis. This reaction introduces a second double bond into the aromatic ring system. The polypeptide is Chorismate synthase (Hyphomonas neptunium (strain ATCC 15444)).